The chain runs to 238 residues: DNA damage-regulated autophagy modulator protein 1 (238 aa).

Helical transmembrane passes span 9 to 29 (AFVPFLLVTWSSAAFIISYVV), 53 to 73 (SGIFGFMINFSAFLGAATMYT), 91 to 111 (VFNLVSLVLGLVGCFGMGIVA), 116 to 136 (LAVPVVHDGGALLAFVCGVVY), 161 to 181 (MVISAVSCAAVIPMIVCASLI), and 200 to 220 (VSAICEWTVAFGFIFYFLTFI).

Belongs to the DRAM/TMEM150 family.

The protein resides in the lysosome membrane. Functionally, lysosomal modulator of autophagy that plays a central role in p53/TP53-mediated apoptosis. Not involved in p73/TP73-mediated autophagy. The protein is DNA damage-regulated autophagy modulator protein 1 (DRAM1) of Homo sapiens (Human).